A 151-amino-acid polypeptide reads, in one-letter code: Transcriptional repressor NrdR (151 aa).

A zinc finger spans residues 3–34 (CPFCHNDQSRVIDSRVIDSGSAIRRRRECTQC). One can recognise an ATP-cone domain in the interval 46–136 (LLVVKRNGLT…VYKSFESADD (91 aa)).

This sequence belongs to the NrdR family. Requires Zn(2+) as cofactor.

Negatively regulates transcription of bacterial ribonucleotide reductase nrd genes and operons by binding to NrdR-boxes. In Corynebacterium diphtheriae (strain ATCC 700971 / NCTC 13129 / Biotype gravis), this protein is Transcriptional repressor NrdR.